Here is a 497-residue protein sequence, read N- to C-terminus: Xylooligosaccharide oxidase (497 aa).

Positions 1–16 (MHLLPLTVSATAVVSA) are cleaved as a signal peptide. A disulfide bridge connects residues C30 and C79. N42 and N117 each carry an N-linked (GlcNAc...) asparagine glycan. An FAD-binding PCMH-type domain is found at 57–230 (LPYTPAAIAK…ASFRFKTFAA (174 aa)). The segment at residues 94-155 (HSYASFGLGG…GKRAFSHGTC (62 aa)) is a cross-link (6-(S-cysteinyl)-8alpha-(pros-histidyl)-FAD (His-Cys)). T154 serves as a coordination point for substrate. N-linked (GlcNAc...) asparagine glycans are attached at residues N192, N233, and N245. R272 contacts substrate. N289 and N307 each carry an N-linked (GlcNAc...) asparagine glycan. The substrate site is built by E412 and Y451.

Belongs to the oxygen-dependent FAD-linked oxidoreductase family. FAD is required as a cofactor. The FAD cofactor is bound via a bicovalent 6-S-cysteinyl, 8alpha-N1-histidyl FAD linkage.

The protein localises to the secreted. It carries out the reaction D-xylobiose + O2 = D-xylobiono-1,5-lactone + H2O2. The catalysed reaction is D-xylotriose + O2 = D-xylotriono-1,5-lactone + H2O2. It catalyses the reaction D-xylotetraose + O2 = D-xylotetraono-1,5-lactone + H2O2. Catalyzes the selective oxidation of C1 hydroxyl moieties on mono-, oligo- and polysaccharides with concomitant reduction of molecular oxygen to hydrogen peroxide. This results in the formation of the corresponding lactones, which typically undergo spontaneous hydrolysis. Xylooligosaccharide oxidase is able to oxidize a variety of substrates including D-xylose, D-cellobiose, lactose and arabinose. The enzyme acts primarily on xylooligosaccharides, indicating that it prefers pentose-based oligosaccharides over hexose-based oligosaccharides. The chain is Xylooligosaccharide oxidase from Thermothelomyces thermophilus (strain ATCC 42464 / BCRC 31852 / DSM 1799) (Sporotrichum thermophile).